The primary structure comprises 348 residues: Phenylalanine--tRNA ligase alpha subunit (348 aa).

A Mg(2+)-binding site is contributed by glutamate 269.

The protein belongs to the class-II aminoacyl-tRNA synthetase family. Phe-tRNA synthetase alpha subunit type 1 subfamily. Tetramer of two alpha and two beta subunits. Mg(2+) serves as cofactor.

The protein localises to the cytoplasm. It carries out the reaction tRNA(Phe) + L-phenylalanine + ATP = L-phenylalanyl-tRNA(Phe) + AMP + diphosphate + H(+). This chain is Phenylalanine--tRNA ligase alpha subunit, found in Dechloromonas aromatica (strain RCB).